Consider the following 399-residue polypeptide: MAKEKFNRTKPHVNIGTIGHVDHGKTTLSAAISAVLSLKGLAEMKDYDNIDNAPEEKERGITIATSHIEYETENRHYAHVDCPGHADYVKNMITGAAQMDGAILVVSAADGPMPQTREHILLSRQVGVPHIVVFLNKQDMVDDQELLELVEVEVRELLSAYEFPGDDTPIVAGSALKALEEAKAGSVGEWGEKVLKLMAEVDAYIPTPVRDTEKSFLMPVEDVFSIAGRGTVVTGRIERGMVKVGDEVEIVGIRATQKTTVTGVEMFRKELDKGEAGDNVGVLLRGTKKEEVERGMVLCKPGSITPHKKFEGEIYVLSKEEGGRHTPFFTNYRPQFYVRTTDVTGSITLPEGVEMVMPGDNVKITVELINSIALELGTKFAIREGGRTVGAGVVSNIIE.

The tr-type G domain occupies 10-209 (KPHVNIGTIG…EVDAYIPTPV (200 aa)). Residues 19 to 26 (GHVDHGKT) are G1. 19-26 (GHVDHGKT) contributes to the GTP binding site. Thr-26 contacts Mg(2+). The G2 stretch occupies residues 60–64 (GITIA). The interval 81-84 (DCPG) is G3. Residues 81–85 (DCPGH) and 136–139 (NKQD) each bind GTP. The segment at 136–139 (NKQD) is G4. Positions 174–176 (SAL) are G5.

This sequence belongs to the TRAFAC class translation factor GTPase superfamily. Classic translation factor GTPase family. EF-Tu/EF-1A subfamily. In terms of assembly, monomer.

The protein resides in the cytoplasm. The enzyme catalyses GTP + H2O = GDP + phosphate + H(+). In terms of biological role, GTP hydrolase that promotes the GTP-dependent binding of aminoacyl-tRNA to the A-site of ribosomes during protein biosynthesis. In Helicobacter acinonychis (strain Sheeba), this protein is Elongation factor Tu.